We begin with the raw amino-acid sequence, 519 residues long: Lysine histidine transporter-like 8 (519 aa).

A disordered region spans residues 1–44 (MDERPETELISIPATPRVSTPEILTPSGQRSPRPATKPSSATWT). Residues 1–114 (MDERPETELI…NLNAGVGFQA (114 aa)) are Cytoplasmic-facing. Helical transmembrane passes span 115–135 (LVLP…SLTI) and 136–156 (AYCW…AVPG). Residues 157 to 176 (KRYNRYVELAQAAFGERLGV) lie on the Cytoplasmic side of the membrane. The chain crosses the membrane as a helical span at residues 177-197 (WLALFPTVYLSAGTATALILI). The Extracellular portion of the chain corresponds to 198–217 (GGETMKLFFQIVCGPLCTSN). A helical transmembrane segment spans residues 218–238 (PLTTVEWYLVFTSLCIVLSQL). Over 239–243 (PNLNS) the chain is Cytoplasmic. The chain crosses the membrane as a helical span at residues 244 to 264 (IAGLSLIGAVTAITYSTMVWV). Topologically, residues 265-282 (LSVSQPRPATISYEPLSM) are extracellular. Residues 283–303 (PSTSGSLFAVLNALGIIAFAF) traverse the membrane as a helical segment. Residues 304–333 (RGHNLVLEIQSTMPSTFKHPAHVPMWRGAK) lie on the Cytoplasmic side of the membrane. Residues 334 to 354 (ISYFLIALCIFPISIGGFWAY) form a helical membrane-spanning segment. Topologically, residues 355 to 377 (GNLMPSGGMLAALYAFHIHDIPR) are extracellular. A helical membrane pass occupies residues 378–398 (GLLATAFLLVVFSCLSSFQIY). Over 399–427 (SMPAFDSFEAGYTSRTNKPCSIWVRSGFR) the chain is Cytoplasmic. Residues 428 to 448 (VFFGFVSFFIGVALPFLSSLA) form a helical membrane-spanning segment. Position 449 (G449) is a topological domain, extracellular. A helical membrane pass occupies residues 450 to 470 (LLGGLTLPVTFAYPCFMWVLI). At 471–485 (KKPAKYSFNWYFHWG) the chain is on the cytoplasmic side. Residues 486-506 (LGWLGVAFSLAFSIGGIWSMV) form a helical membrane-spanning segment. The Extracellular portion of the chain corresponds to 507-519 (TNGLKLKFFKPPN).

It belongs to the amino acid/polyamine transporter 2 family. Amino acid/auxin permease (AAAP) (TC 2.A.18.2) subfamily.

Its subcellular location is the cell membrane. Its function is as follows. Amino acid transporter. The sequence is that of Lysine histidine transporter-like 8 (AATL1) from Arabidopsis thaliana (Mouse-ear cress).